Consider the following 614-residue polypeptide: Glutamyl-tRNA(Gln) amidotransferase subunit E (614 aa).

It belongs to the GatB/GatE family. GatE subfamily. As to quaternary structure, heterodimer of GatD and GatE.

It catalyses the reaction L-glutamyl-tRNA(Gln) + L-glutamine + ATP + H2O = L-glutaminyl-tRNA(Gln) + L-glutamate + ADP + phosphate + H(+). Allows the formation of correctly charged Gln-tRNA(Gln) through the transamidation of misacylated Glu-tRNA(Gln) in organisms which lack glutaminyl-tRNA synthetase. The reaction takes place in the presence of glutamine and ATP through an activated gamma-phospho-Glu-tRNA(Gln). The GatDE system is specific for glutamate and does not act on aspartate. In Methanospirillum hungatei JF-1 (strain ATCC 27890 / DSM 864 / NBRC 100397 / JF-1), this protein is Glutamyl-tRNA(Gln) amidotransferase subunit E.